Here is a 173-residue protein sequence, read N- to C-terminus: Ribosome maturation factor RimM (173 aa).

In terms of domain architecture, PRC barrel spans 98 to 170; it reads EDEYYWCDLI…RMLITPLEGL (73 aa).

Belongs to the RimM family. In terms of assembly, binds ribosomal protein uS19.

It is found in the cytoplasm. Its function is as follows. An accessory protein needed during the final step in the assembly of 30S ribosomal subunit, possibly for assembly of the head region. Essential for efficient processing of 16S rRNA. May be needed both before and after RbfA during the maturation of 16S rRNA. It has affinity for free ribosomal 30S subunits but not for 70S ribosomes. In Pelobacter propionicus (strain DSM 2379 / NBRC 103807 / OttBd1), this protein is Ribosome maturation factor RimM.